A 283-amino-acid polypeptide reads, in one-letter code: Bifunctional protein FolD (283 aa).

NADP(+) contacts are provided by residues 165–167 and Ser-190; that span reads GAS.

It belongs to the tetrahydrofolate dehydrogenase/cyclohydrolase family. In terms of assembly, homodimer.

The enzyme catalyses (6R)-5,10-methylene-5,6,7,8-tetrahydrofolate + NADP(+) = (6R)-5,10-methenyltetrahydrofolate + NADPH. It catalyses the reaction (6R)-5,10-methenyltetrahydrofolate + H2O = (6R)-10-formyltetrahydrofolate + H(+). Its pathway is one-carbon metabolism; tetrahydrofolate interconversion. In terms of biological role, catalyzes the oxidation of 5,10-methylenetetrahydrofolate to 5,10-methenyltetrahydrofolate and then the hydrolysis of 5,10-methenyltetrahydrofolate to 10-formyltetrahydrofolate. The chain is Bifunctional protein FolD from Cupriavidus pinatubonensis (strain JMP 134 / LMG 1197) (Cupriavidus necator (strain JMP 134)).